A 141-amino-acid chain; its full sequence is Hemoglobin subunit alpha (141 aa).

The 141-residue stretch at 1 to 141 folds into the Globin domain; it reads VLSPADKNNV…VSTVLTSKYR (141 aa). S3 bears the Phosphoserine mark. N6-succinyllysine is present on residues K7 and K11. An N6-acetyllysine; alternate modification is found at K16. K16 carries the N6-succinyllysine; alternate modification. Y24 is subject to Phosphotyrosine. S35 bears the Phosphoserine mark. K40 carries the N6-succinyllysine modification. Residue S49 is modified to Phosphoserine. H58 lines the O2 pocket. Heme b is bound at residue H87. Residue S102 is modified to Phosphoserine. T108 is modified (phosphothreonine). 2 positions are modified to phosphoserine: S124 and S131. Residues T134 and T137 each carry the phosphothreonine modification. The residue at position 138 (S138) is a Phosphoserine.

Belongs to the globin family. As to quaternary structure, heterotetramer of two alpha chains and two beta chains. Red blood cells.

Its function is as follows. Involved in oxygen transport from the lung to the various peripheral tissues. In terms of biological role, hemopressin acts as an antagonist peptide of the cannabinoid receptor CNR1. Hemopressin-binding efficiently blocks cannabinoid receptor CNR1 and subsequent signaling. This chain is Hemoglobin subunit alpha (HBA), found in Urocitellus townsendii (Townsend's ground squirrel).